The primary structure comprises 475 residues: 7-dehydrocholesterol reductase (475 aa).

The interval 1–21 (MAAKSQPSAPKTKSTSGLTNG) is disordered. Ser14 carries the phosphoserine modification. 6 helical membrane passes run 40–60 (LASVIFLLLFAPFIVYYFIMA), 151–173 (WLLTHLLWFANAHLLGWFSPTII), 178–200 (IPLLWCANILGYTVSTFAMVKGY), 266–286 (VTNSMVLVNILQAIYVLDFFW), 306–326 (LGWGDCVWLPYLYTLQGLYLV), and 331–351 (QLPTYYALGVLLLGLLGYYIF). NADP(+)-binding positions include Lys358, Arg362, Leu395, Trp400, and 407 to 408 (NY). Residues 420–440 (LACGGGHLLPYFYIIFMAILL) traverse the membrane as a helical segment. NADP(+) contacts are provided by residues Asp447, 451–455 (CANKY), and Tyr462.

Belongs to the ERG4/ERG24 family. In terms of assembly, interacts with DHCR24; this interaction regulates DHCR7 activity. Interacts with TMEM147.

Its subcellular location is the endoplasmic reticulum membrane. It catalyses the reaction cholesterol + NADP(+) = 7-dehydrocholesterol + NADPH + H(+). It carries out the reaction 7-dehydrodesmosterol + NADPH + H(+) = desmosterol + NADP(+). The enzyme catalyses 5,6alpha-epoxy-5alpha-cholestan-3beta-ol + H2O = 5alpha-cholestane-3beta,5,6beta-triol. The catalysed reaction is 5,6beta-epoxy-5beta-cholestan-3beta-ol + H2O = 5alpha-cholestane-3beta,5,6beta-triol. It participates in steroid biosynthesis; cholesterol biosynthesis. Its function is as follows. Oxidoreductase that catalyzes the last step of the cholesterol synthesis pathway, which transforms cholesta-5,7-dien-3beta-ol (7-dehydrocholesterol,7-DHC) into cholesterol by reducing the C7-C8 double bond of its sterol core. Can also metabolize cholesta-5,7,24-trien-3beta-ol (7-dehydrodemosterol, 7-DHD) to desmosterol, which is then metabolized by the Delta(24)-sterol reductase (DHCR24) to cholesterol. Modulates ferroptosis (a form of regulated cell death driven by iron-dependent lipid peroxidation) through the metabolic breakdown of the anti-ferroptotic metabolites 7-DHC and 7-DHD which, when accumulated, divert the propagation of peroxyl radical-mediated damage from phospholipid components to its sterol core, protecting plasma and mitochondrial membranes from phospholipid autoxidation. In terms of biological role, component of the microsomal antiestrogen binding site (AEBS), a multiproteic complex at the ER membrane that consists of an association between cholestenol Delta-isomerase/EBP and DHCR7. This complex is responsible for cholesterol-5,6-epoxide hydrolase (ChEH) activity, which consists in the hydration of cholesterol-5,6-epoxides (5,6-EC) into cholestane-3beta,5alpha,6beta-triol (CT). The precise role of each component of this complex has not been described yet. The chain is 7-dehydrocholesterol reductase (DHCR7) from Bos taurus (Bovine).